The sequence spans 200 residues: Probable nicotinate-nucleotide adenylyltransferase (200 aa).

This sequence belongs to the NadD family.

The enzyme catalyses nicotinate beta-D-ribonucleotide + ATP + H(+) = deamido-NAD(+) + diphosphate. It functions in the pathway cofactor biosynthesis; NAD(+) biosynthesis; deamido-NAD(+) from nicotinate D-ribonucleotide: step 1/1. Catalyzes the reversible adenylation of nicotinate mononucleotide (NaMN) to nicotinic acid adenine dinucleotide (NaAD). The protein is Probable nicotinate-nucleotide adenylyltransferase of Clostridium botulinum (strain Alaska E43 / Type E3).